A 208-amino-acid polypeptide reads, in one-letter code: MSSGLIGKKVGMTSVFDDEGNNVACTVVEAGPNVVTQVKSEGRDGYSAVQLGFDNVKEKNVTQAMLGHFEKAGCPPKRMLSEFRDFGDDVDLGDVVRVQDLFQEDERIDVVGVSKGKGFQGVVKRHGFSGVGMMTHGQSDRQRHPGSIGASADPSRVFKGVRMAGQTGGERTKIQNLRVVRILADQNAILIHGSVPGPKSEYVELHKK.

Belongs to the universal ribosomal protein uL3 family. Part of the 50S ribosomal subunit. Forms a cluster with proteins L14 and L19.

Its function is as follows. One of the primary rRNA binding proteins, it binds directly near the 3'-end of the 23S rRNA, where it nucleates assembly of the 50S subunit. The protein is Large ribosomal subunit protein uL3 of Salinibacter ruber (strain DSM 13855 / M31).